A 110-amino-acid chain; its full sequence is uncharacterized protein (110 aa).

An N-terminal signal peptide occupies residues 1 to 26 (MIRNVLLAFMICSGMTLLGGCSSVMS). Residues 87–110 (RVEKSEANAQATNAVIPPARMPDN) are disordered.

This sequence to E.coli YceK.

This is an uncharacterized protein from Escherichia coli (strain K12).